Here is an 876-residue protein sequence, read N- to C-terminus: Phosphoenolpyruvate carboxylase (876 aa).

Active-site residues include His-138 and Lys-543.

This sequence belongs to the PEPCase type 1 family. It depends on Mg(2+) as a cofactor.

The enzyme catalyses oxaloacetate + phosphate = phosphoenolpyruvate + hydrogencarbonate. Its function is as follows. Forms oxaloacetate, a four-carbon dicarboxylic acid source for the tricarboxylic acid cycle. This chain is Phosphoenolpyruvate carboxylase, found in Pseudomonas fluorescens (strain Pf0-1).